Here is a 397-residue protein sequence, read N- to C-terminus: Tryptophan synthase beta chain (397 aa).

Residue Lys-87 is modified to N6-(pyridoxal phosphate)lysine.

Belongs to the TrpB family. In terms of assembly, tetramer of two alpha and two beta chains. Requires pyridoxal 5'-phosphate as cofactor.

It carries out the reaction (1S,2R)-1-C-(indol-3-yl)glycerol 3-phosphate + L-serine = D-glyceraldehyde 3-phosphate + L-tryptophan + H2O. It functions in the pathway amino-acid biosynthesis; L-tryptophan biosynthesis; L-tryptophan from chorismate: step 5/5. Functionally, the beta subunit is responsible for the synthesis of L-tryptophan from indole and L-serine. The chain is Tryptophan synthase beta chain from Citrobacter koseri (strain ATCC BAA-895 / CDC 4225-83 / SGSC4696).